Consider the following 275-residue polypeptide: tRNA uridine(34) hydroxylase (275 aa).

Residues 122 to 218 (SRSDVYTIDT…YFKSTQNKNS (97 aa)) form the Rhodanese domain. The active-site Cysteine persulfide intermediate is the Cys178.

Belongs to the TrhO family.

The enzyme catalyses uridine(34) in tRNA + AH2 + O2 = 5-hydroxyuridine(34) in tRNA + A + H2O. Its function is as follows. Catalyzes oxygen-dependent 5-hydroxyuridine (ho5U) modification at position 34 in tRNAs. The sequence is that of tRNA uridine(34) hydroxylase from Ehrlichia chaffeensis (strain ATCC CRL-10679 / Arkansas).